Here is a 514-residue protein sequence, read N- to C-terminus: Probable cytosol aminopeptidase (514 aa).

Positions 266 and 271 each coordinate Mn(2+). Lys278 is an active-site residue. Mn(2+) is bound by residues Asp289, Asp357, and Glu359. Arg361 is a catalytic residue.

Belongs to the peptidase M17 family. It depends on Mn(2+) as a cofactor.

It localises to the cytoplasm. It carries out the reaction Release of an N-terminal amino acid, Xaa-|-Yaa-, in which Xaa is preferably Leu, but may be other amino acids including Pro although not Arg or Lys, and Yaa may be Pro. Amino acid amides and methyl esters are also readily hydrolyzed, but rates on arylamides are exceedingly low.. It catalyses the reaction Release of an N-terminal amino acid, preferentially leucine, but not glutamic or aspartic acids.. Functionally, presumably involved in the processing and regular turnover of intracellular proteins. Catalyzes the removal of unsubstituted N-terminal amino acids from various peptides. This is Probable cytosol aminopeptidase from Oleidesulfovibrio alaskensis (strain ATCC BAA-1058 / DSM 17464 / G20) (Desulfovibrio alaskensis).